The following is a 172-amino-acid chain: Adenine phosphoribosyltransferase (172 aa).

It belongs to the purine/pyrimidine phosphoribosyltransferase family. As to quaternary structure, homodimer.

The protein localises to the cytoplasm. The catalysed reaction is AMP + diphosphate = 5-phospho-alpha-D-ribose 1-diphosphate + adenine. The protein operates within purine metabolism; AMP biosynthesis via salvage pathway; AMP from adenine: step 1/1. In terms of biological role, catalyzes a salvage reaction resulting in the formation of AMP, that is energically less costly than de novo synthesis. This Clostridium botulinum (strain Alaska E43 / Type E3) protein is Adenine phosphoribosyltransferase.